Here is a 2036-residue protein sequence, read N- to C-terminus: MISMMETSTTEKKSNTDNSILKKIIIDSWRQRLSPIEWSLKLYNGFYNNNNNNNSNNNNNNNNNNNNNNVDNNEINSIELCEILLDLMNIGQSPSPLLVSYLRYAISIKLIGYNEFFESVYKFSSISRAQHFSVILDILFDVINIINYPSHHQNIFNSDNIENSNNNNNNNNNNNNNNSNNNIGFKVSSLSSSLKRNNSKIISTPIVTLLSSPSPSSSSSSSTSPSSQQPQPPQPQPLSYTSPIKKTVLIKNPDSTDSDEIMKVKEEPIKFKTTTTTTSTTTTTSTTSTTTNEISSSPPTNGNGEETTITTKTEDSNGINGIDSEDHKGENGKASPQMNGVHPGSDGNISHKRKEMDSNTIFDDDDSNGVDQHCSNKKMKHTDTLTQPQPKQIQNPQQQEQQQQQQENIEQNQHGNLHLHQPSQQQQQQQQQTSQPSLTTTTASAVTQTTTTASTINKSTKATTKKNYHKQLLSFTRLATLLFKVIEYYFQEDERINNINKSVNNNNNNNNNNNNNNNNNNNNNYNNNNNDSMDQNSNNPAVKYNSNNNNINNNNNNNNNNNNNNNNNNNNNNNNNNNNNINNILYKNSVKSLEILSIIQNNSTFKTLIYLAKYEFTLSSFKDLVLPFLAIQNSIRDNIVKQNIPSTQLISSQVKGQEFASQQTQLLNPLFQLIKQKYQKLFIDFRRILINKQEILPNHDIGSLVHGSSQSDKQIILSFEIIIDQEINGNHFKSSHTKLAISRGKPNELDTILNLKNNKNNNNNNNNSNGNGNGIDIGSSTDGSNKLSSTNIEEGNNNNNSSTHLNGNDQSQQSLDDEEPKQSQQQQLPPPSPPQQSHQKIQIQKQLQLIRQAKNLENVSDCFFKLLTLKTVKGLSDVEFLLEIVKILFQKLVRCNPNSNEYKKTRLFLLFKIPHFYSLMIDNYGNNNNNNNTNTNNINNNKNKNSKKSNNKNKNNKNNNKKNKNNNNNNNNNNNNNNNNNNNNNNNNNNNNNNNNNNNGESSDKNEINPEGSIGSNNNNDNDNNDETNTNTSSNNNNNNNNSNDNENVTDNNKNNNSNTKNNNNSNNNNNNNNNNNNNNNNNNNNNNNNNNNNNNNNNNNNNNNNNNNNNNNNNNNNKKNKDLNLHGNIIENVLYQINQFPSLYNVEDNIILSLIQILIKKHLVDINLLKSLFPNYHTDIDSIDSEIQSPPSSELSFDNLFDIHSIADIVKIKELIESLLNNSDPNNVSIMKRLFDFIKNHLINSFDYQDKLLNVLFNAKNIDYDSNKLLIAVIMYIFSDPLVIDTIDVHGYTLRLVMILIDVCESYGSSTTATTTEDIDIFKNENDNHDQKHLYFYFTIPFNLLYTLLIILYDVKNNKYNLDLIKSKLSESLNNKNNSRKSKSNNSSNNSINNINNNNNNNNNNNNNNNNNNNNNNNNNNFIQWIYNMIKDTNFSNGNGVNNVSTSFEFQFLKNLFDSDLGEDSIEKFQNFSQREYSSWDIVSKLPNVLYNIFDCYDRNIIQEEKVTQTMQLLFQYIPFSPIIVFDYLSKTKSSFFNVSPSSSTTTTTTTTSTTTTITTTTTNSSAYSTTTTTSASTSLPKSTDGKLLNGKSSNTSTTTTKNNGDTPTITTVITTMSSKNDKPLSLVEACLTNLNENRLLFRLSDYYKSLISEDHLNDLYKLFDPISETINLLLLSPKLQKFNELGYYSNQSTLFNSICLTNLSPPNQLSNMTPANAIRQVIDQFLTKSVSPNLSNLERDIKYIHMRLSNDLCQIVNLVSLEILDIILQSCQIESLYSIRAMELGGYILGGLIGIESLPILLNSIIPSWSEHIQTSLHGQLLSYFCFSSIVNSNALYYIQTDLCIQQSFKKFFLLLNDTMKRILSVAPLNGLITFCLSTITLFIHLNHSSITTYLYNSSSNTQLINQLYEIISKNQSLKKKQKLKQKKQQHNNNNGGEYNIDQDHIEQIQQQQQQYQKQQQQRKDEPNYEKLEEFIKTQYQRNNHSKLKSIFNILSISQLEDLSMSILNLSNFFLAISIFEDKNDLQYCSKLFN.

8 disordered regions span residues asparagine 51 to valine 70, aspartate 159 to glycine 184, serine 212 to threonine 451, lysine 501 to asparagine 580, asparagine 754 to lysine 840, asparagine 928 to leucine 1124, asparagine 1375 to asparagine 1419, and asparagine 1565 to threonine 1608. The segment covering serine 212–glutamine 229 has biased composition (low complexity). A compositionally biased stretch (basic and acidic residues) spans glutamate 260–lysine 270. Composition is skewed to low complexity over residues threonine 273–threonine 291, threonine 300–threonine 311, glutamine 387–threonine 451, lysine 501–asparagine 539, asparagine 547–asparagine 580, and asparagine 754–glycine 770. Residues asparagine 505–isoleucine 584 are a coiled coil. A compositionally biased stretch (polar residues) spans glycine 778 to leucine 787. 2 stretches are compositionally biased toward low complexity: residues serine 788 to asparagine 808 and asparagine 928 to asparagine 943. A coiled-coil region spans residues asparagine 943 to asparagine 977. Residues lysine 944 to lysine 964 show a composition bias toward basic residues. Composition is skewed to low complexity over residues asparagine 965 to asparagine 999, asparagine 1017 to asparagine 1118, serine 1385 to asparagine 1419, asparagine 1565 to serine 1584, and serine 1594 to threonine 1608. Residues serine 1915–glutamate 1968 are a coiled coil.

The protein belongs to the Mediator complex subunit 24 family. Component of the Mediator complex.

The protein resides in the nucleus. Functionally, component of the Mediator complex, a coactivator involved in the regulated transcription of nearly all RNA polymerase II-dependent genes. Mediator functions as a bridge to convey information from gene-specific regulatory proteins to the basal RNA polymerase II transcription machinery. Mediator is recruited to promoters by direct interactions with regulatory proteins and serves as a scaffold for the assembly of a functional preinitiation complex with RNA polymerase II and the general transcription factors. The protein is Putative mediator of RNA polymerase II transcription subunit 24 (med24) of Dictyostelium discoideum (Social amoeba).